A 317-amino-acid chain; its full sequence is Putrescine transport system permease protein PotH (317 aa).

Over 1 to 31 (MSTLEPAAQSKPPGGFKLWLSQLQMKHGRKL) the chain is Cytoplasmic. The chain crosses the membrane as a helical span at residues 32-51 (VIALPYIWLILLFLLPFLIV). At 52-104 (FKISLAEMARAIPPYTELMEWADGQLSITLNLGNFLQLTDDPLYFDAYLQSLQ) the chain is on the periplasmic side. One can recognise an ABC transmembrane type-1 domain in the interval 99-305 (YLQSLQVAAI…LLLIVPIMWF (207 aa)). A helical membrane pass occupies residues 105–124 (VAAISTFCCLLIGYPLAWAV). Residues 125-133 (AHSKPSTRN) are Cytoplasmic-facing. Residues 134–153 (ILLLLVILPSWTSFLIRVYA) traverse the membrane as a helical segment. At 154–184 (WMGILKNNGVLNNFLLWLGVIDQPLTILHTN) the chain is on the periplasmic side. A helical membrane pass occupies residues 185-204 (LAVYIGIVYAYVPFMVLPIY). Over 205–239 (TALIRIDYSLVEAALDLGARPLKTFFTVIVPLTKG) the chain is Cytoplasmic. The helical transmembrane segment at 240 to 259 (GIIAGSMLVFIPAVGEFVIP) threads the bilayer. The Periplasmic segment spans residues 260-284 (ELLGGPDSIMIGRVLWQEFFNNRDW). The helical transmembrane segment at 285–304 (PVASAVAIIMLLLLIVPIMW) threads the bilayer. Residues 305-317 (FHKHQQKSVGEHG) are Cytoplasmic-facing.

The protein belongs to the binding-protein-dependent transport system permease family. CysTW subfamily. In terms of assembly, the complex is composed of two ATP-binding proteins (PotG), two transmembrane proteins (PotH and PotI) and a solute-binding protein (PotF).

It localises to the cell inner membrane. Transport is feedback inhibited by intracellular polyamines. In terms of biological role, part of the ABC transporter complex PotFGHI involved in putrescine uptake. Responsible for the translocation of the substrate across the membrane. Imports putrescine for maintenance of the optimal concentration of polyamines necessary for cell growth in the presence of glucose. This Escherichia coli (strain K12) protein is Putrescine transport system permease protein PotH.